Here is a 95-residue protein sequence, read N- to C-terminus: uncharacterized protein (95 aa).

Positions 1 to 21 (MKVLSISLIFFALLLTGCSQV) are cleaved as a signal peptide.

This is an uncharacterized protein from Archaeoglobus fulgidus (strain ATCC 49558 / DSM 4304 / JCM 9628 / NBRC 100126 / VC-16).